Consider the following 134-residue polypeptide: Ribosome-binding factor A (134 aa).

It belongs to the RbfA family. In terms of assembly, monomer. Binds 30S ribosomal subunits, but not 50S ribosomal subunits or 70S ribosomes.

It is found in the cytoplasm. In terms of biological role, one of several proteins that assist in the late maturation steps of the functional core of the 30S ribosomal subunit. Associates with free 30S ribosomal subunits (but not with 30S subunits that are part of 70S ribosomes or polysomes). Required for efficient processing of 16S rRNA. May interact with the 5'-terminal helix region of 16S rRNA. The sequence is that of Ribosome-binding factor A from Bartonella bacilliformis (strain ATCC 35685 / KC583 / Herrer 020/F12,63).